The chain runs to 98 residues: Integration host factor subunit alpha (98 aa).

Belongs to the bacterial histone-like protein family. Heterodimer of an alpha and a beta chain.

In terms of biological role, this protein is one of the two subunits of integration host factor, a specific DNA-binding protein that functions in genetic recombination as well as in transcriptional and translational control. The polypeptide is Integration host factor subunit alpha (Actinobacillus pleuropneumoniae serotype 5b (strain L20)).